Here is a 285-residue protein sequence, read N- to C-terminus: NAD kinase (285 aa).

The Proton acceptor role is filled by D66. NAD(+) contacts are provided by residues 66-67, 137-138, R148, R165, D167, and 178-183; these read DG, ND, and TAYSMS.

The protein belongs to the NAD kinase family. A divalent metal cation serves as cofactor.

It is found in the cytoplasm. It catalyses the reaction NAD(+) + ATP = ADP + NADP(+) + H(+). Functionally, involved in the regulation of the intracellular balance of NAD and NADP, and is a key enzyme in the biosynthesis of NADP. Catalyzes specifically the phosphorylation on 2'-hydroxyl of the adenosine moiety of NAD to yield NADP. This chain is NAD kinase, found in Chlorobium luteolum (strain DSM 273 / BCRC 81028 / 2530) (Pelodictyon luteolum).